The primary structure comprises 133 residues: Large ribosomal subunit protein bL17 (133 aa).

The protein belongs to the bacterial ribosomal protein bL17 family. In terms of assembly, part of the 50S ribosomal subunit. Contacts protein L32.

This chain is Large ribosomal subunit protein bL17, found in Polaromonas naphthalenivorans (strain CJ2).